An 824-amino-acid polypeptide reads, in one-letter code: E3 ubiquitin-protein ligase TRIM71 (824 aa).

The segment at 23 to 93 adopts an RING-type zinc-finger fold; it reads CPLCKELCGC…PLKLRCPTCD (71 aa). The tract at residues 37 to 56 is disordered; it reads SSNSSTSSSSSQTSNSSSTS. The B box-type 1; atypical zinc finger occupies 147-194; that stretch reads LSDPQCSSCDEGNPATSHCLDCQEYLCDNCVRAHQRVRLTKDHFIEGL. The Zn(2+) site is built by Cys-152, Cys-155, Cys-176, His-180, Cys-234, His-237, Cys-257, and His-262. The B box-type 2 zinc-finger motif lies at 229 to 270; it reads ERMDFCQHHDDAVLRFFCDSCTVPICRECSLGRHAGHSFTYL. Residues 293-321 adopt a coiled-coil conformation; the sequence is QAIQLSIEKAQAIAEQVELKAKVVQSEVK. One copy of the Filamin repeat lies at 435–536; that stretch reads SSGAFATASK…IEGSPFKVMV (102 aa). NHL repeat units follow at residues 549–592, 596–639, 643–686, 690–733, 737–780, and 784–824; these read MASF…FKPC, HHKF…FTFD, LLKF…FGPD, LNKY…IRPD, ARFL…FEPN, and LCKF…ILMF.

The protein belongs to the TRIM/RBCC family.

It localises to the cytoplasm. The protein localises to the P-body. The enzyme catalyses S-ubiquitinyl-[E2 ubiquitin-conjugating enzyme]-L-cysteine + [acceptor protein]-L-lysine = [E2 ubiquitin-conjugating enzyme]-L-cysteine + N(6)-ubiquitinyl-[acceptor protein]-L-lysine.. It functions in the pathway protein modification; protein ubiquitination. Its function is as follows. E3 ubiquitin-protein ligase that cooperates with the microRNAs (miRNAs) machinery and promotes embryonic stem cells proliferation and maintenance. Binds to miRNAs and participates in post-transcriptional repression of transcripts. Required to maintain proliferation and prevent premature differentiation of neural progenitor cells during early neural development. This chain is E3 ubiquitin-protein ligase TRIM71 (trim71), found in Danio rerio (Zebrafish).